The sequence spans 416 residues: Serine hydroxymethyltransferase (416 aa).

(6S)-5,6,7,8-tetrahydrofolate is bound by residues Leu-121 and 125 to 127; that span reads GHL. Lys-230 is modified (N6-(pyridoxal phosphate)lysine). 355 to 357 is a (6S)-5,6,7,8-tetrahydrofolate binding site; sequence SPF.

This sequence belongs to the SHMT family. In terms of assembly, homodimer. Pyridoxal 5'-phosphate serves as cofactor.

The protein localises to the cytoplasm. It catalyses the reaction (6R)-5,10-methylene-5,6,7,8-tetrahydrofolate + glycine + H2O = (6S)-5,6,7,8-tetrahydrofolate + L-serine. The protein operates within one-carbon metabolism; tetrahydrofolate interconversion. Its pathway is amino-acid biosynthesis; glycine biosynthesis; glycine from L-serine: step 1/1. In terms of biological role, catalyzes the reversible interconversion of serine and glycine with tetrahydrofolate (THF) serving as the one-carbon carrier. This reaction serves as the major source of one-carbon groups required for the biosynthesis of purines, thymidylate, methionine, and other important biomolecules. Also exhibits THF-independent aldolase activity toward beta-hydroxyamino acids, producing glycine and aldehydes, via a retro-aldol mechanism. The chain is Serine hydroxymethyltransferase from Streptococcus thermophilus (strain ATCC BAA-250 / LMG 18311).